We begin with the raw amino-acid sequence, 517 residues long: ATP synthase subunit beta (517 aa).

167-174 is an ATP binding site; it reads GGAGVGKT. Basic and acidic residues-rich tracts occupy residues 475–484 and 495–508; these read AESMGAKMDD and DSKD…KADD. The tract at residues 475-517 is disordered; sequence AESMGAKMDDGGSDGAPPPSDSKDKGKGDSKADDKGDDADKDA.

The protein belongs to the ATPase alpha/beta chains family. In terms of assembly, F-type ATPases have 2 components, CF(1) - the catalytic core - and CF(0) - the membrane proton channel. CF(1) has five subunits: alpha(3), beta(3), gamma(1), delta(1), epsilon(1). CF(0) has three main subunits: a(1), b(2) and c(9-12). The alpha and beta chains form an alternating ring which encloses part of the gamma chain. CF(1) is attached to CF(0) by a central stalk formed by the gamma and epsilon chains, while a peripheral stalk is formed by the delta and b chains.

It is found in the cell membrane. It catalyses the reaction ATP + H2O + 4 H(+)(in) = ADP + phosphate + 5 H(+)(out). Produces ATP from ADP in the presence of a proton gradient across the membrane. The catalytic sites are hosted primarily by the beta subunits. The polypeptide is ATP synthase subunit beta (Mycobacterium sp. (strain JLS)).